Reading from the N-terminus, the 212-residue chain is MDLTNLRAKYTTRGLDIKDLDQNPFKQFETWFNEAIEAKLTEPNAFSLATVGKDMMPSIRTVLLKIFDEKGFVFFTNYKSTKANQIKENPKAAALFPWLDLERQVKIEGDIQKISTTESLKYFLSRPKGSQIGAWVSHQSQVISSRSLLEQKFDEIKNKFVNGEVPFPSFWGGYIIKPTKIEFWQGGQDRLHDRFLYELKENGAWSISRLAP.

Residues 7–10 (RAKY) and Lys-65 contribute to the substrate site. FMN-binding positions include 60–65 (RTVLLK), 75–76 (FT), Lys-82, and Gln-104. 3 residues coordinate substrate: Tyr-122, Arg-126, and Ser-130. Residues 139-140 (QS) and Trp-184 contribute to the FMN site. Residue 190–192 (RLH) participates in substrate binding. An FMN-binding site is contributed by Arg-194.

Belongs to the pyridoxamine 5'-phosphate oxidase family. Homodimer. FMN serves as cofactor.

The catalysed reaction is pyridoxamine 5'-phosphate + O2 + H2O = pyridoxal 5'-phosphate + H2O2 + NH4(+). The enzyme catalyses pyridoxine 5'-phosphate + O2 = pyridoxal 5'-phosphate + H2O2. It participates in cofactor metabolism; pyridoxal 5'-phosphate salvage; pyridoxal 5'-phosphate from pyridoxamine 5'-phosphate: step 1/1. The protein operates within cofactor metabolism; pyridoxal 5'-phosphate salvage; pyridoxal 5'-phosphate from pyridoxine 5'-phosphate: step 1/1. Functionally, catalyzes the oxidation of either pyridoxine 5'-phosphate (PNP) or pyridoxamine 5'-phosphate (PMP) into pyridoxal 5'-phosphate (PLP). The sequence is that of Pyridoxine/pyridoxamine 5'-phosphate oxidase from Aliarcobacter butzleri (strain RM4018) (Arcobacter butzleri).